Here is a 1058-residue protein sequence, read N- to C-terminus: Isoleucine--tRNA ligase (1058 aa).

Residues 48–58 carry the 'HIGH' region motif; it reads PYTTGHIHLGT. The 'KMSKS' region motif lies at 596-600; it reads KMSKS. Lys-599 is an ATP binding site.

This sequence belongs to the class-I aminoacyl-tRNA synthetase family. IleS type 2 subfamily. Monomer. Zn(2+) is required as a cofactor.

The protein localises to the cytoplasm. It catalyses the reaction tRNA(Ile) + L-isoleucine + ATP = L-isoleucyl-tRNA(Ile) + AMP + diphosphate. Its function is as follows. Catalyzes the attachment of isoleucine to tRNA(Ile). As IleRS can inadvertently accommodate and process structurally similar amino acids such as valine, to avoid such errors it has two additional distinct tRNA(Ile)-dependent editing activities. One activity is designated as 'pretransfer' editing and involves the hydrolysis of activated Val-AMP. The other activity is designated 'posttransfer' editing and involves deacylation of mischarged Val-tRNA(Ile). This Methanosarcina mazei (strain ATCC BAA-159 / DSM 3647 / Goe1 / Go1 / JCM 11833 / OCM 88) (Methanosarcina frisia) protein is Isoleucine--tRNA ligase.